The sequence spans 255 residues: Phosphate import ATP-binding protein PstB (255 aa).

Positions 9–250 (IAVQNLNFYY…PKIQRTEDYI (242 aa)) constitute an ABC transporter domain. 41–48 (GPSGCGKS) contacts ATP.

Belongs to the ABC transporter superfamily. Phosphate importer (TC 3.A.1.7) family. In terms of assembly, the complex is composed of two ATP-binding proteins (PstB), two transmembrane proteins (PstC and PstA) and a solute-binding protein (PstS).

The protein resides in the cell inner membrane. It catalyses the reaction phosphate(out) + ATP + H2O = ADP + 2 phosphate(in) + H(+). Functionally, part of the ABC transporter complex PstSACB involved in phosphate import. Responsible for energy coupling to the transport system. This chain is Phosphate import ATP-binding protein PstB, found in Haemophilus influenzae (strain 86-028NP).